The following is a 515-amino-acid chain: Cytochrome P450 monooxygenase janP (515 aa).

A helical membrane pass occupies residues 20-36 (GFLWKYAAFMVFIYLLL). Cys-456 contributes to the heme binding site. A glycan (N-linked (GlcNAc...) asparagine) is linked at Asn-501.

Belongs to the cytochrome P450 family. It depends on heme as a cofactor.

It localises to the membrane. It participates in secondary metabolite biosynthesis. Its function is as follows. Cytochrome P450 monooxygenase; part of the gene cluster that mediates the biosynthesis of the indole diterpenes janthitremanes such as shearinine K or shearinine A. The geranylgeranyl diphosphate (GGPP) synthase janG catalyzes the first step in janthitremane biosynthesis via conversion of farnesyl pyrophosphate and isopentyl pyrophosphate into geranylgeranyl pyrophosphate (GGPP). Condensation of indole-3-glycerol phosphate with GGPP by the prenyl transferase janC then forms 3-geranylgeranylindole (3-GGI). Epoxidation by the FAD-dependent monooxygenase janM leads to a epoxidized-GGI that is substrate of the terpene cyclase janB for cyclization to yield paspaline. Paspaline is subsequently converted to 13-desoxypaspaline by the cytochrome P450 monooxygenase janP, via beta-PC-M6 in a series of alpha-face oxidations. The cytochrome P450 monooxygenase janQ is proposed to carry out sequential beta-face oxidation steps at C-7 and C-13 of 13-desoxypaspaline to form paspalicine and paspalinine respectively. The indole diterpene prenyltransferase janD may then convert paspalinine into shearinine K which is substrate of janO and/or additional enzymes for oxidation and cyclization to generate shearinine A. The chain is Cytochrome P450 monooxygenase janP from Penicillium janthinellum (Penicillium vitale).